The chain runs to 494 residues: Pre-mRNA-processing factor 31 (494 aa).

2 coiled-coil regions span residues 88–122 (EIDFIKLLPFFNEIIPLIKSNIKLMHNFLISLYSR) and 191–225 (IKTRTQILEANSILENLWKLQEDIGQYIASKISII). The Nop domain maps to 225–346 (IAPNVCFLVG…LSKKARKLSE (122 aa)). Residues 344-370 (LSEAPSISETKALPIPEDQPKKKRAGR) form a disordered region.

The protein belongs to the PRP31 family. Component of the U4/U6-U5 tri-snRNP complex composed of the U4, U6 and U5 snRNAs and at least PRP3, PRP4, PRP6, PRP8, PRP18, PRP31, PRP38, SNU13, SNU23, SNU66, SNU114, SPP381, SMB1, SMD1, SMD2, SMD3, SMX2, SMX3, LSM2, LSM3, LSM4, LSM5, LSM6, LSM7, LSM8, BRR2 and DIB1.

The protein localises to the nucleus. Promotes the association of the U4/U6.U5 tri-snRNP particle with pre-spliceosomes to form the mature spliceosomal complex. In Saccharomyces cerevisiae (strain ATCC 204508 / S288c) (Baker's yeast), this protein is Pre-mRNA-processing factor 31 (PRP31).